The sequence spans 1233 residues: uncharacterized protein (1233 aa).

Disordered regions lie at residues 1–39 (MVESLTVENQEHNVQPPSVTSAGDSYSTLATDLPLPSTN), 65–116 (QELS…DAIS), 160–211 (AEGT…TDLS), 250–577 (EKMD…DAPR), 594–825 (DLEV…NSEK), 851–872 (NKENEDVEVDTEEDAEVENSEK), and 902–955 (EDVE…ENSK). Basic residues predominate over residues 72–83 (KSSKLKGHKKKN). Residue S180 is modified to Phosphoserine. The segment covering 183-199 (TRRKKNKKKKTTNRRGR) has biased composition (basic residues). The span at 201–211 (SSNPADTTDLS) shows a compositional bias: polar residues. 2 stretches are compositionally biased toward basic and acidic residues: residues 250-280 (EKMDIRTRNESSDKTFDIDVPNKDNVDETSS) and 287-300 (NEEKAEHTLPREEN). Polar residues predominate over residues 329–345 (GQASTKDVESESLTKNG). 2 stretches are compositionally biased toward basic and acidic residues: residues 349 to 370 (KENESKHLKAGEKQQTESDRDG) and 379 to 408 (NQKETEIGKEDHVFEQKDKEDEKCRKELSV). Over residues 409–422 (NHENNMSHNFNAAG) the composition is skewed to polar residues. The residue at position 462 (S462) is a Phosphoserine. Residues 466-478 (EKEEEEEEEEEEN) show a composition bias toward acidic residues. Basic and acidic residues-rich tracts occupy residues 484-497 (VKKENVTGEQEAVR), 508-527 (STSKGEEIMGGDEKQSEAGE), 594-622 (DLEVAKEDQEGEQVKLDEPVKAMKDDKIA), 631-672 (EDMK…KTPE), and 684-711 (RPEDLQINERDPEVLKEDVRVPDEDVKP). Phosphoserine is present on S523. The segment covering 728-739 (QRVQISTEQAET) has biased composition (polar residues). Residues 753–783 (FKEEEKPKRFEITQEGDKITGKDTNHEHGEA) show a composition bias toward basic and acidic residues. A compositionally biased stretch (acidic residues) spans 855 to 868 (EDVEVDTEEDAEVE). T861 bears the Phosphothreonine mark. Basic and acidic residues-rich tracts occupy residues 910 to 920 (SKEDIETKCSE) and 935 to 948 (EVSKKDAEAVTKED). The residue at position 975 (S975) is a Phosphoserine. Disordered regions lie at residues 984-1071 (LPEL…PKKA) and 1109-1128 (KDSTTQTTEQSKKNNDKPQD). A compositionally biased stretch (basic and acidic residues) spans 986–999 (ELEKQDIKDNKGED). Residues S1037 and S1046 each carry the phosphoserine modification. Composition is skewed to basic and acidic residues over residues 1062–1071 (QSTRENPKKA) and 1118–1127 (QSKKNNDKPQ). The Glutaredoxin domain maps to 1132-1233 (TSEIRKLNEK…KLRELIYDTI (102 aa)).

This is an uncharacterized protein from Saccharomyces cerevisiae (strain ATCC 204508 / S288c) (Baker's yeast).